Consider the following 127-residue polypeptide: Tyrosine-protein phosphatase 2 (127 aa).

One can recognise a Tyrosine-protein phosphatase domain in the interval 1–127 (QGSKVIVMVT…PRDCEAPILV (127 aa)). A compositionally biased stretch (acidic residues) spans 63-81 (VYDNDDGTEQNDEQTEEEP). Residues 63–82 (VYDNDDGTEQNDEQTEEEPE) are disordered.

This sequence belongs to the protein-tyrosine phosphatase family.

The enzyme catalyses O-phospho-L-tyrosyl-[protein] + H2O = L-tyrosyl-[protein] + phosphate. This chain is Tyrosine-protein phosphatase 2 (STY-2), found in Styela plicata (Wrinkled sea squirt).